The primary structure comprises 547 residues: Chaperonin GroEL 1 (547 aa).

ATP is bound by residues T30–P33, K51, D87–T91, G415, and D496.

This sequence belongs to the chaperonin (HSP60) family. As to quaternary structure, forms a cylinder of 14 subunits composed of two heptameric rings stacked back-to-back. Interacts with the co-chaperonin GroES.

The protein localises to the cytoplasm. It catalyses the reaction ATP + H2O + a folded polypeptide = ADP + phosphate + an unfolded polypeptide.. Its function is as follows. Together with its co-chaperonin GroES, plays an essential role in assisting protein folding. The GroEL-GroES system forms a nano-cage that allows encapsulation of the non-native substrate proteins and provides a physical environment optimized to promote and accelerate protein folding. The chain is Chaperonin GroEL 1 from Gluconacetobacter diazotrophicus (strain ATCC 49037 / DSM 5601 / CCUG 37298 / CIP 103539 / LMG 7603 / PAl5).